A 152-amino-acid polypeptide reads, in one-letter code: Protein Turandot X (152 aa).

The signal sequence occupies residues 1-22; sequence MGFYISSLLICVFLGIVRFASA.

Belongs to the Turandot family.

It is found in the secreted. A humoral factor that may play a role in stress tolerance. This chain is Protein Turandot X, found in Drosophila erecta (Fruit fly).